Consider the following 170-residue polypeptide: Zinc finger matrin-type protein 5 (170 aa).

The segment at 51–79 (EQNKRPCRKFLLTGQCDFGSNCRFSHMSE) adopts a C3H1-type zinc-finger fold. Positions 150 to 170 (PPSLRAPPPGGWPLQPSVQWG) are disordered.

Component of the U11/U12 snRNPs that are part of the U12-type spliceosome.

The protein localises to the nucleus. The sequence is that of Zinc finger matrin-type protein 5 (ZMAT5) from Bos taurus (Bovine).